A 496-amino-acid chain; its full sequence is MKSTVASALLVLAGTAVQAQSGPWQQCGGIGWQGPFTCVSGHTCQVLNDWYHQCVPGGGPSPPPTSPPPTTPPPTSPPPTSPPPTSPPPTSPPPTSPPPTSPPPTSPPPTSPPPTSPPPTSPPPSSGSCPSTPGGLGSGNQRLPDPFTFHNGNTVTSAADFQCRQREVSSLIQQYELGQFPAPPQSVTSSYSGNTLSITVSDQGRSISFSVSISGGSGSKSPAIIAYGAPSIPVPNGVATIRFNNDDIAAQQSGSSRGQGKFYNLYGSGHSAGAMTAWAWGVARIIDALEKTPAAGIDPTRVGVTGCSRNGKGAMVAGALEPRIALTIPQESGSGGSACWRISNWQGQQGQNVQTPAQIITENVWLGPVFNNHANNVNALPFDHHQLAGLIAPRALYVIENSDMEWLGWTATYGCMAAARTQWEALGALDNFGFSQVGGNQHCSFNSGKQSAELNAFINKFLLQSGGGTTSILRTERNHGSFNLAEWTPWNVPNLR.

The first 19 residues, 1–19 (MKSTVASALLVLAGTAVQA), serve as a signal peptide directing secretion. The 36-residue stretch at 20-55 (QSGPWQQCGGIGWQGPFTCVSGHTCQVLNDWYHQCV) folds into the CBM1 domain. Residues 57-151 (GGGPSPPPTS…RLPDPFTFHN (95 aa)) form a disordered region. Pro residues predominate over residues 59–125 (GPSPPPTSPP…SPPPTSPPPS (67 aa)). 3 disulfide bridges follow: Cys-129/Cys-163, Cys-307/Cys-443, and Cys-339/Cys-415. The GXSYXG catalytic site motif signature appears at 306–311 (GCSRNG). Catalysis depends on Ser-308, which acts as the Nucleophile. Substrate-binding residues include Lys-312, Gln-354, Glu-362, and Trp-406. His-442 serves as the catalytic Proton donor/acceptor.

Belongs to the carbohydrate esterase 15 (CE15) family.

Its subcellular location is the secreted. The enzyme catalyses a 4-O-methyl-alpha-D-glucuronosyl ester derivative + H2O = 4-O-methyl-alpha-D-glucuronate derivative + an alcohol + H(+). Its function is as follows. Glucuronoyl esterase which may play a significant role in biomass degradation, as it is considered to disconnect hemicellulose from lignin through the hydrolysis of the ester bond between 4-O-methyl-D-glucuronic acid residues of glucuronoxylans and aromatic alcohols of lignin. Cleaves native lignin-carbohydrate (LC) ester bonds from LC complex preparations of spruce (softwood) and birch (hardwood), containing mainly hemicelluloses with partially acetylated glucomannans in spruce and partially acetylated xylan in birch. Can hydrolyze benzyl glucuronic acid (BnGlcA), allyl glucuronic acid (allylGlcA) and to a lower degree methyl glucuronic acid (MeGlcA) in vitro. The polypeptide is 4-O-methyl-glucuronoyl methylesterase 1 (Sodiomyces alcalophilus (Acremonium alcalophilum)).